A 470-amino-acid chain; its full sequence is Ribulose bisphosphate carboxylase large chain (470 aa).

Substrate is bound by residues N115 and T165. K167 acts as the Proton acceptor in catalysis. K169 contacts substrate. Positions 193, 195, and 196 each coordinate Mg(2+). K193 is modified (N6-carboxylysine). Catalysis depends on H286, which acts as the Proton acceptor. Substrate-binding residues include R287, H319, and S371.

The protein belongs to the RuBisCO large chain family. Type I subfamily. In terms of assembly, heterohexadecamer of 8 large chains and 8 small chains. Mg(2+) serves as cofactor.

The protein localises to the carboxysome. It carries out the reaction 2 (2R)-3-phosphoglycerate + 2 H(+) = D-ribulose 1,5-bisphosphate + CO2 + H2O. The catalysed reaction is D-ribulose 1,5-bisphosphate + O2 = 2-phosphoglycolate + (2R)-3-phosphoglycerate + 2 H(+). Functionally, ruBisCO catalyzes two reactions: the carboxylation of D-ribulose 1,5-bisphosphate, the primary event in carbon dioxide fixation, as well as the oxidative fragmentation of the pentose substrate in the photorespiration process. Both reactions occur simultaneously and in competition at the same active site. The polypeptide is Ribulose bisphosphate carboxylase large chain (Prochlorococcus marinus (strain SARG / CCMP1375 / SS120)).